The sequence spans 281 residues: 16S rRNA (guanine(1405)-N(7))-methyltransferase (281 aa).

S-adenosyl-L-methionine contacts are provided by residues Tyr60, 105–107, Arg111, Gly136, Asp160, 186–187, Phe203, and Gln212; these read HTS and QG.

This sequence belongs to the methyltransferase superfamily. Aminoglycoside resistance family.

The catalysed reaction is guanosine(1405) in 16S rRNA + S-adenosyl-L-methionine = N(7)-methylguanosine(1405) in 16S rRNA + S-adenosyl-L-homocysteine. Specifically methylates the N(7) position of guanine 1405 in 16S rRNA. Confers resistance to various aminoglycosides, including gentamicin and kanamycin. This Proteus mirabilis protein is 16S rRNA (guanine(1405)-N(7))-methyltransferase (rmtC).